The chain runs to 308 residues: Hydroxyacylglutathione hydrolase, mitochondrial (308 aa).

A mitochondrion-targeting transit peptide spans 1 to 13 (MVLGRGLLGRRSL). The Zn(2+) site is built by His-102, His-104, Asp-106, and His-107. Lys-116 bears the N6-acetyllysine mark. Zn(2+) is bound by residues His-158 and Asp-182. Residues 191 to 193 (KFY) and 221 to 223 (HEY) each bind substrate. His-221 is a binding site for Zn(2+). Position 229 is an N6-acetyllysine; alternate (Lys-229). An N6-succinyllysine; alternate modification is found at Lys-229. 297 to 300 (RKEK) contacts substrate.

This sequence belongs to the metallo-beta-lactamase superfamily. Glyoxalase II family. In terms of assembly, monomer. Zn(2+) serves as cofactor. In terms of tissue distribution, testis.

Its subcellular location is the mitochondrion matrix. The protein localises to the cytoplasm. The catalysed reaction is an S-(2-hydroxyacyl)glutathione + H2O = a 2-hydroxy carboxylate + glutathione + H(+). It catalyses the reaction (R)-S-lactoylglutathione + H2O = (R)-lactate + glutathione + H(+). Its pathway is secondary metabolite metabolism; methylglyoxal degradation; (R)-lactate from methylglyoxal: step 2/2. In terms of biological role, thiolesterase that catalyzes the hydrolysis of S-D-lactoyl-glutathione to form glutathione and D-lactic acid. This chain is Hydroxyacylglutathione hydrolase, mitochondrial (HAGH), found in Macaca fascicularis (Crab-eating macaque).